Here is a 386-residue protein sequence, read N- to C-terminus: Phosphoglycerate kinase (386 aa).

Residues 21-23, Arg36, 59-62, Arg113, and Arg146 contribute to the substrate site; these read DLN and HLGR. Residues Lys197, Glu314, and 340–343 each bind ATP; that span reads GGDT.

The protein belongs to the phosphoglycerate kinase family. Monomer.

It is found in the cytoplasm. The catalysed reaction is (2R)-3-phosphoglycerate + ATP = (2R)-3-phospho-glyceroyl phosphate + ADP. It participates in carbohydrate degradation; glycolysis; pyruvate from D-glyceraldehyde 3-phosphate: step 2/5. This chain is Phosphoglycerate kinase, found in Ectopseudomonas mendocina (strain ymp) (Pseudomonas mendocina).